The sequence spans 369 residues: tRNA(Met) cytidine acetate ligase (369 aa).

Residues Val7 to Leu20, Gly96, Asn152, and Arg175 contribute to the ATP site.

This sequence belongs to the TmcAL family.

Its subcellular location is the cytoplasm. It carries out the reaction cytidine(34) in elongator tRNA(Met) + acetate + ATP = N(4)-acetylcytidine(34) in elongator tRNA(Met) + AMP + diphosphate. In terms of biological role, catalyzes the formation of N(4)-acetylcytidine (ac(4)C) at the wobble position of elongator tRNA(Met), using acetate and ATP as substrates. First activates an acetate ion to form acetyladenylate (Ac-AMP) and then transfers the acetyl group to tRNA to form ac(4)C34. This chain is tRNA(Met) cytidine acetate ligase, found in Streptococcus agalactiae serotype Ia (strain ATCC 27591 / A909 / CDC SS700).